The following is a 188-amino-acid chain: dCTP deaminase (188 aa).

DCTP is bound by residues 111 to 116 (KSTYAR), 135 to 137 (TLE), glutamine 156, tyrosine 170, and glutamine 180. Glutamate 137 (proton donor/acceptor) is an active-site residue.

Belongs to the dCTP deaminase family. In terms of assembly, homotrimer.

The catalysed reaction is dCTP + H2O + H(+) = dUTP + NH4(+). Its pathway is pyrimidine metabolism; dUMP biosynthesis; dUMP from dCTP (dUTP route): step 1/2. Its function is as follows. Catalyzes the deamination of dCTP to dUTP. This is dCTP deaminase from Thioalkalivibrio sulfidiphilus (strain HL-EbGR7).